The chain runs to 98 residues: Co-chaperonin GroES (98 aa).

Belongs to the GroES chaperonin family. Heptamer of 7 subunits arranged in a ring. Interacts with the chaperonin GroEL.

It localises to the cytoplasm. Together with the chaperonin GroEL, plays an essential role in assisting protein folding. The GroEL-GroES system forms a nano-cage that allows encapsulation of the non-native substrate proteins and provides a physical environment optimized to promote and accelerate protein folding. GroES binds to the apical surface of the GroEL ring, thereby capping the opening of the GroEL channel. In Agrobacterium fabrum (strain C58 / ATCC 33970) (Agrobacterium tumefaciens (strain C58)), this protein is Co-chaperonin GroES.